The chain runs to 142 residues: MRNYDLSPLLRQWIGFDKLASSMGGQEPQGFPPYNIEKSDDNHYRISLALAGFKQSELDIEVEGPRLTVRGKPTPSEKQVEYLHQGLVCKEFALTFTLAEHLQVSEAQFENGLLHIDLVRQVPEALQPQRIAIGTTPGLEAK.

One can recognise a sHSP domain in the interval 25–136 (GQEPQGFPPY…QPQRIAIGTT (112 aa)).

The protein belongs to the small heat shock protein (HSP20) family. Homodimer. Forms homomultimers of about 100-150 subunits at optimal growth temperatures. Conformation changes to oligomers at high temperatures or high ionic concentrations. The decrease in size of the multimers is accompanied by an increase in chaperone activity.

It localises to the cytoplasm. Functionally, associates with aggregated proteins, together with IbpA, to stabilize and protect them from irreversible denaturation and extensive proteolysis during heat shock and oxidative stress. Aggregated proteins bound to the IbpAB complex are more efficiently refolded and reactivated by the ATP-dependent chaperone systems ClpB and DnaK/DnaJ/GrpE. Its activity is ATP-independent. This is Small heat shock protein IbpB from Serratia proteamaculans (strain 568).